We begin with the raw amino-acid sequence, 121 residues long: Replication protein A 14 kDa subunit (121 aa).

V2 carries the N-acetylvaline modification. Residues K23, K39, and K88 each participate in a glycyl lysine isopeptide (Lys-Gly) (interchain with G-Cter in ubiquitin) cross-link.

The protein belongs to the replication factor A protein 3 family. In terms of assembly, component of the canonical replication protein A complex (RPA), a heterotrimer composed of RPA1, RPA2 and RPA3. Also a component of the aRPA, the alternative replication protein A complex, a trimeric complex similar to the replication protein A complex/RPA but where RPA1 and RPA3 are associated with RPA4 instead of RPA2. Interacts with BRIP1/FANCJ via the RPA1 subunit; following DNA damage they colocalize in foci in the nucleus. Post-translationally, ubiquitinated by RFWD3 at stalled replication forks in response to DNA damage: ubiquitination by RFWD3 does not lead to degradation by the proteasome and promotes removal of the RPA complex from stalled replication forks, promoting homologous recombination.

The protein localises to the nucleus. In terms of biological role, as part of the heterotrimeric replication protein A complex (RPA/RP-A), binds and stabilizes single-stranded DNA intermediates that form during DNA replication or upon DNA stress. It prevents their reannealing and in parallel, recruits and activates different proteins and complexes involved in DNA metabolism. Thereby, it plays an essential role both in DNA replication and the cellular response to DNA damage. In the cellular response to DNA damage, the RPA complex controls DNA repair and DNA damage checkpoint activation. Through recruitment of ATRIP activates the ATR kinase a master regulator of the DNA damage response. It is required for the recruitment of the DNA double-strand break repair factors RAD51 and RAD52 to chromatin, in response to DNA damage. Also recruits to sites of DNA damage proteins like XPA and XPG that are involved in nucleotide excision repair and is required for this mechanism of DNA repair. Also plays a role in base excision repair (BER), probably through interaction with UNG. RPA stimulates 5'-3' helicase activity of BRIP1/FANCJ. Also recruits SMARCAL1/HARP, which is involved in replication fork restart, to sites of DNA damage. May also play a role in telomere maintenance. RPA3 has its own single-stranded DNA-binding activity and may be responsible for polarity of the binding of the complex to DNA. As part of the alternative replication protein A complex, aRPA, binds single-stranded DNA and probably plays a role in DNA repair. Compared to the RPA2-containing, canonical RPA complex, may not support chromosomal DNA replication and cell cycle progression through S-phase. The aRPA may not promote efficient priming by DNA polymerase alpha but could support DNA synthesis by polymerase delta in presence of PCNA and replication factor C (RFC), the dual incision/excision reaction of nucleotide excision repair and RAD51-dependent strand exchange. The polypeptide is Replication protein A 14 kDa subunit (RPA3) (Homo sapiens (Human)).